The primary structure comprises 591 residues: Glutathione S-transferase T2 (591 aa).

A GST N-terminal domain is found at 1-82; that stretch reads MKLKVYADRM…YLSSAYASVV (82 aa). Glutathione-binding positions include 11-12, 40-41, 53-54, and 66-67; these read SQ, QL, KV, and ES. Positions 89 to 226 constitute a GST C-terminal domain; the sequence is DLSKRAKIHS…EVLFRAKDRF (138 aa). Positions 229 to 272 are disordered; the sequence is QREMATASKPGPQSKIIQFSSIGGTSDGPNLVQDTTDRKARRRK. A compositionally biased stretch (polar residues) spans 243 to 262; that stretch reads KIIQFSSIGGTSDGPNLVQD. A Myb-like domain is found at 265-338; it reads DRKARRRKWS…HCRQRWRKIN (74 aa).

This sequence belongs to the GST superfamily. Theta family.

The protein resides in the peroxisome. It catalyses the reaction RX + glutathione = an S-substituted glutathione + a halide anion + H(+). In terms of biological role, may be involved in the conjugation of reduced glutathione to a wide number of exogenous and endogenous hydrophobic electrophiles and have a detoxification role against certain herbicides. In Arabidopsis thaliana (Mouse-ear cress), this protein is Glutathione S-transferase T2 (GSTT2).